Reading from the N-terminus, the 543-residue chain is Terpineol synthase, chloroplastic (543 aa).

The tract at residues 1–22 (MNTEPSPNHYSAISSSDQNLTR) is disordered. Arginine 263, aspartate 300, aspartate 304, arginine 435, and asparagine 438 together coordinate (2E)-geranyl diphosphate. Residues aspartate 300 and aspartate 304 each contribute to the Mg(2+) site. Residues 300-304 (DDVYD) carry the DDXXD motif motif. Mg(2+) is bound by residues asparagine 438, threonine 442, and glutamate 446.

It belongs to the terpene synthase family. Tpsb subfamily. Monomer. Mg(2+) serves as cofactor. The cofactor is Mn(2+). Confined to flowers.

It is found in the plastid. It localises to the chloroplast. It catalyses the reaction (2E)-geranyl diphosphate + H2O = (S)-alpha-terpineol + diphosphate. The enzyme catalyses (2E)-geranyl diphosphate = sabinene + diphosphate. It carries out the reaction (2E)-geranyl diphosphate = beta-myrcene + diphosphate. The catalysed reaction is (2E)-geranyl diphosphate = limonene + diphosphate. It catalyses the reaction (2E)-geranyl diphosphate + H2O = 1,8-cineole + diphosphate. Its pathway is secondary metabolite biosynthesis; terpenoid biosynthesis. Functionally, monoterpene synthase (TPS) involved in the biosynthesis of monoterpene natural products of the 'cineole cassette', volatile compounds present in floral scent. Catalyzes the conversion of (2E)-geranyl diphosphate (GPP) into alpha-terpineol and, as minor products, sabinene, beta-myrcene, limonene and 1,8-cineole. In Nicotiana alata (Winged tobacco), this protein is Terpineol synthase, chloroplastic.